A 119-amino-acid chain; its full sequence is Small ribosomal subunit protein uS17 (119 aa).

Over residues 1–21 (MAEAKTGAKATKSAAAGAADG) the composition is skewed to low complexity. Residues 1–44 (MAEAKTGAKATKSAAAGAADGASKEKGPKHTPSTPKPRGRRKTR) form a disordered region.

The protein belongs to the universal ribosomal protein uS17 family. In terms of assembly, part of the 30S ribosomal subunit.

Functionally, one of the primary rRNA binding proteins, it binds specifically to the 5'-end of 16S ribosomal RNA. The chain is Small ribosomal subunit protein uS17 from Mycobacterium marinum (strain ATCC BAA-535 / M).